We begin with the raw amino-acid sequence, 416 residues long: Secreted RxLR effector protein 25 (416 aa).

A signal peptide spans 1 to 20; that stretch reads MRSWLLLLVGLSSYFALSTS. The short motif at 49–88 is the RxLR-dEER element; that stretch reads RKLRAPGGDTNTLKDSGKARREKKVWKLFCRVFLQLDDEK.

This sequence belongs to the RxLR effector family.

It is found in the secreted. The protein resides in the host cytoplasm. The protein localises to the host nucleus. Its function is as follows. Effector that partially suppresses the tobacco programmed cell death induced by cell death-inducing proteins. This Plasmopara viticola (Downy mildew of grapevine) protein is Secreted RxLR effector protein 25.